The primary structure comprises 268 residues: 3-deoxy-manno-octulosonate cytidylyltransferase (268 aa).

Belongs to the KdsB family.

Its subcellular location is the cytoplasm. It carries out the reaction 3-deoxy-alpha-D-manno-oct-2-ulosonate + CTP = CMP-3-deoxy-beta-D-manno-octulosonate + diphosphate. It functions in the pathway nucleotide-sugar biosynthesis; CMP-3-deoxy-D-manno-octulosonate biosynthesis; CMP-3-deoxy-D-manno-octulosonate from 3-deoxy-D-manno-octulosonate and CTP: step 1/1. It participates in bacterial outer membrane biogenesis; lipopolysaccharide biosynthesis. In terms of biological role, activates KDO (a required 8-carbon sugar) for incorporation into bacterial lipopolysaccharide in Gram-negative bacteria. The sequence is that of 3-deoxy-manno-octulosonate cytidylyltransferase from Psychrobacter arcticus (strain DSM 17307 / VKM B-2377 / 273-4).